We begin with the raw amino-acid sequence, 107 residues long: U1-lycotoxin-Ls1t (107 aa).

The N-terminal stretch at 1-20 (MMKVLVVVALLVTLISYSSS) is a signal peptide. The propeptide occupies 21 to 41 (EGIDDLEADELLSLMANEQTR). 4 disulfide bridges follow: cysteine 44–cysteine 59, cysteine 51–cysteine 68, cysteine 58–cysteine 86, and cysteine 70–cysteine 84.

The protein belongs to the neurotoxin 19 (CSTX) family. 04 (U1-Lctx) subfamily. In terms of tissue distribution, expressed by the venom gland.

It is found in the secreted. This Lycosa singoriensis (Wolf spider) protein is U1-lycotoxin-Ls1t.